A 155-amino-acid chain; its full sequence is Cyanate hydratase (155 aa).

Residues R95, E98, and S121 contribute to the active site.

This sequence belongs to the cyanase family.

The enzyme catalyses cyanate + hydrogencarbonate + 3 H(+) = NH4(+) + 2 CO2. Catalyzes the reaction of cyanate with bicarbonate to produce ammonia and carbon dioxide. This is Cyanate hydratase from Pseudomonas syringae pv. syringae (strain B728a).